The chain runs to 158 residues: Ribosome maturation factor RimP (158 aa).

This sequence belongs to the RimP family.

It localises to the cytoplasm. Functionally, required for maturation of 30S ribosomal subunits. The polypeptide is Ribosome maturation factor RimP (Streptococcus suis (strain 98HAH33)).